The sequence spans 421 residues: Adenosylhomocysteinase (421 aa).

Residues D128 and E153 each contribute to the substrate site. An NAD(+)-binding site is contributed by 154-156 (TTT). Positions 183 and 187 each coordinate substrate. NAD(+)-binding positions include N188, 217–222 (GYGWCG), E240, 296–298 (AGH), and N343.

The protein belongs to the adenosylhomocysteinase family. It depends on NAD(+) as a cofactor.

The protein resides in the cytoplasm. The enzyme catalyses S-adenosyl-L-homocysteine + H2O = L-homocysteine + adenosine. It participates in amino-acid biosynthesis; L-homocysteine biosynthesis; L-homocysteine from S-adenosyl-L-homocysteine: step 1/1. Functionally, may play a key role in the regulation of the intracellular concentration of adenosylhomocysteine. This Thermococcus kodakarensis (strain ATCC BAA-918 / JCM 12380 / KOD1) (Pyrococcus kodakaraensis (strain KOD1)) protein is Adenosylhomocysteinase.